We begin with the raw amino-acid sequence, 200 residues long: MELMVKGADALTVSETTFGREFNEALVHQVVVAYAAGARQGTRAQKTRSEVSGGGAKPWRQKGTGRARAGTIRSPIWRTGGVTFAAKPQDHSQKVNKKMYRGAMKSILSELVRQERLIVVDNFSVEAPKTKELVAKLKELELTDALIVTSEVDENLFLAARNLYKVDARDVAGIDPVSLIAFDKVVMTAEAVKQVEEMLA.

Residues 42 to 65 (TRAQKTRSEVSGGGAKPWRQKGTG) are disordered.

Belongs to the universal ribosomal protein uL4 family. Part of the 50S ribosomal subunit.

One of the primary rRNA binding proteins, this protein initially binds near the 5'-end of the 23S rRNA. It is important during the early stages of 50S assembly. It makes multiple contacts with different domains of the 23S rRNA in the assembled 50S subunit and ribosome. Its function is as follows. Forms part of the polypeptide exit tunnel. The chain is Large ribosomal subunit protein uL4 from Vibrio parahaemolyticus serotype O3:K6 (strain RIMD 2210633).